The chain runs to 248 residues: ATP synthase subunit a (248 aa).

5 helical membrane passes run 31–51 (GQVLIASWIAIALILTVVILG), 90–110 (VPYVGTLFLFIFVSNWMGNLF), 129–149 (INTTAGLALLTSIMYFVAGIS), 195–215 (VIAVLVLLVPLFIPVPVMVLF), and 216–236 (LFTGAIQALIFSTLSAAYIGE).

The protein belongs to the ATPase A chain family. F-type ATPases have 2 components, CF(1) - the catalytic core - and CF(0) - the membrane proton channel. CF(1) has five subunits: alpha(3), beta(3), gamma(1), delta(1), epsilon(1). CF(0) has four main subunits: a, b, b' and c.

The protein localises to the cellular thylakoid membrane. Functionally, key component of the proton channel; it plays a direct role in the translocation of protons across the membrane. The chain is ATP synthase subunit a from Synechococcus sp. (strain JA-2-3B'a(2-13)) (Cyanobacteria bacterium Yellowstone B-Prime).